We begin with the raw amino-acid sequence, 611 residues long: Serine protease FAM111A (611 aa).

Positions 16–28 (KCNMKIEHYFSPV) match the PIP-box motif. Lys-20 is covalently cross-linked (Glycyl lysine isopeptide (Lys-Gly) (interchain with G-Cter in SUMO2)). At Ser-26 the chain carries Phosphoserine. Glycyl lysine isopeptide (Lys-Gly) (interchain with G-Cter in SUMO2) cross-links involve residues Lys-30 and Lys-65. The disordered stretch occupies residues 44–73 (ESRGDPRATTNTQAQRFHSPKKNPEDQTMP). Residues 336 to 611 (KVTKNSSSIK…DVEMMSDEDL (276 aa)) form an interaction with SV40 large T antigen region. Residues His-385, Asp-439, and Ser-541 each act as charge relay system in the active site.

It belongs to the FAM111 family. As to quaternary structure, interacts (via PIP-box) with PCNA; then interaction is direct. (Microbial infection) Interacts with SV40 virus large T antigen and this interaction is required for efficient viral replication and sustained viral gene expression in restrictive cell types. In terms of assembly, (Microbial infection) Interacts with vaccinia virus protein OPG079; this interaction promotes the degradation of OPG079. In terms of processing, autocatalytically cleaved; activating the protein. Autocatalytic cleavage takes place in trans.

The protein localises to the nucleus. It localises to the chromosome. It is found in the cytoplasm. In terms of biological role, single-stranded DNA-binding serine protease that mediates the proteolytic cleavage of covalent DNA-protein cross-links (DPCs) during DNA synthesis, thereby playing a key role in maintaining genomic integrity. DPCs are highly toxic DNA lesions that interfere with essential chromatin transactions, such as replication and transcription, and which are induced by reactive agents, such as UV light or formaldehyde. Protects replication fork from stalling by removing DPCs, such as covalently trapped topoisomerase 1 (TOP1) adducts on DNA lesion, or poly(ADP-ribose) polymerase 1 (PARP1)-DNA complexes trapped by PARP inhibitors. Required for PCNA loading on replication sites. Promotes S-phase entry and DNA synthesis. Also acts as a restriction factor for some viruses including SV40 polyomavirus and vaccinia virus. Mechanistically, affects nuclear barrier function during viral replication by mediating the disruption of the nuclear pore complex (NPC) via its protease activity. In turn, interacts with vaccinia virus DNA-binding protein OPG079 in the cytoplasm and promotes its degradation without the need of its protease activity but through autophagy. This chain is Serine protease FAM111A, found in Homo sapiens (Human).